The following is a 243-amino-acid chain: Thiamin pyrophosphokinase 1 (243 aa).

The protein belongs to the thiamine pyrophosphokinase family.

The enzyme catalyses thiamine + ATP = thiamine diphosphate + AMP + H(+). It participates in cofactor biosynthesis; thiamine diphosphate biosynthesis; thiamine diphosphate from thiamine: step 1/1. In terms of biological role, catalyzes the phosphorylation of thiamine to thiamine pyrophosphate. Functions cell non-autonomously. The polypeptide is Thiamin pyrophosphokinase 1 (Caenorhabditis elegans).